The sequence spans 329 residues: Probable tyrosine--tRNA ligase, cytoplasmic (329 aa).

Residue tyrosine 35 coordinates L-tyrosine. The 'HIGH' region signature appears at 40-48; it reads TTGKPHIAY. L-tyrosine contacts are provided by tyrosine 162, glutamine 166, aspartate 169, and glutamine 184. Residues 218–222 carry the 'KMSKS' region motif; it reads KMSSS.

It belongs to the class-I aminoacyl-tRNA synthetase family. Homodimer.

The protein localises to the cytoplasm. The enzyme catalyses tRNA(Tyr) + L-tyrosine + ATP = L-tyrosyl-tRNA(Tyr) + AMP + diphosphate + H(+). The polypeptide is Probable tyrosine--tRNA ligase, cytoplasmic (Vairimorpha ceranae (strain BRL01) (Microsporidian parasite)).